Here is a 134-residue protein sequence, read N- to C-terminus: L-ectoine synthase (134 aa).

It belongs to the ectoine synthase family.

It carries out the reaction (2S)-4-acetamido-2-aminobutanoate = L-ectoine + H2O. It participates in amine and polyamine biosynthesis; ectoine biosynthesis; L-ectoine from L-aspartate 4-semialdehyde: step 3/3. In terms of biological role, catalyzes the circularization of gamma-N-acetyl-alpha,gamma-diaminobutyric acid (ADABA) to ectoine (1,4,5,6-tetrahydro-2-methyl-4-pyrimidine carboxylic acid), which is an excellent osmoprotectant. The chain is L-ectoine synthase (ectC) from Sporosarcina pasteurii (Bacillus pasteurii).